The chain runs to 345 residues: Succinylglutamate desuccinylase (345 aa).

Residues His-63, Glu-66, and His-160 each coordinate Zn(2+). Residue Glu-224 is part of the active site.

This sequence belongs to the AspA/AstE family. Succinylglutamate desuccinylase subfamily. The cofactor is Zn(2+).

The enzyme catalyses N-succinyl-L-glutamate + H2O = L-glutamate + succinate. Its pathway is amino-acid degradation; L-arginine degradation via AST pathway; L-glutamate and succinate from L-arginine: step 5/5. Its function is as follows. Transforms N(2)-succinylglutamate into succinate and glutamate. The protein is Succinylglutamate desuccinylase of Shewanella woodyi (strain ATCC 51908 / MS32).